A 79-amino-acid polypeptide reads, in one-letter code: RNA-binding protein Hfq (79 aa).

The Sm domain occupies D10–V70.

The protein belongs to the Hfq family. As to quaternary structure, homohexamer.

Its function is as follows. RNA chaperone that binds small regulatory RNA (sRNAs) and mRNAs to facilitate mRNA translational regulation in response to envelope stress, environmental stress and changes in metabolite concentrations. Also binds with high specificity to tRNAs. The sequence is that of RNA-binding protein Hfq from Bartonella tribocorum (strain CIP 105476 / IBS 506).